Consider the following 93-residue polypeptide: Alpha-defensin 22 (93 aa).

Residues 1–19 (MKKLVLLSALVLLAYQVQT) form the signal peptide. A propeptide spanning residues 20-58 (DPIQNTDEETNTEEQPGEEDQAVSVSFGGQEGSALHEKL) is cleaved from the precursor. Residues 22–41 (IQNTDEETNTEEQPGEEDQA) are disordered. Acidic residues predominate over residues 25 to 40 (TDEETNTEEQPGEEDQ). 3 cysteine pairs are disulfide-bonded: cysteine 64/cysteine 89, cysteine 66/cysteine 81, and cysteine 71/cysteine 88.

Belongs to the alpha-defensin family.

Its subcellular location is the secreted. Its function is as follows. May have microbicidal activities. This chain is Alpha-defensin 22 (Defa22), found in Mus musculus (Mouse).